Here is a 434-residue protein sequence, read N- to C-terminus: MGRVQLFEIRLSQGRVVYGPGEPLAGTVHLRLGAPLPFRAIRVTCMGSCGVSTKANDGAWVVEESYFNSSLSLADKGSLPAGEHNFPFQFLLPATAPTSFEGPFGKIVHQVRASIDTPRFSKDHKCSLVFYILSPLNLNSIPDIEQPNVASTTKKFSYKLVKTGNVVLTASTDLRGYVVGQVLRLQADIENQSGKDTSPVVASLLQKVSYKAKRWIYDVRTIAEVEGTGVKAWRRAQWQEQILVPALPQSALPGCSLIHIDYYLQVSMKAPEATVTLPLFVGNIAVNQTPLSPCPGRESSPGTLSLVVPSAPPQEEAEAVASGPHFSDPVSLSTKSHSQQQPLSAPLGSVSVTTTEPWVQVGSPARHSLHPPLCISIGATVPYFAEGSAGPVPTTSALILPPEYSSWGYPYEAPPSYEQSCGAAGTDLGLIPGS.

A disordered region spans residues 292-349 (SPCPGRESSPGTLSLVVPSAPPQEEAEAVASGPHFSDPVSLSTKSHSQQQPLSAPLGS). Over residues 330–343 (VSLSTKSHSQQQPL) the composition is skewed to polar residues. Short sequence motifs (PPxY motif) lie at residues 401–404 (PPEY) and 414–417 (PPSY).

The protein belongs to the arrestin family. As to quaternary structure, interacts (via PPxY motifs) with ITCH (via WW domains); the interaction is direct and participates in the recruitment of the ubiquitin-protein ligase ITCH to the NOTCH1 receptor. Interacts with ARRB1 and ARRB2; the interaction is direct. Interacts with TSG101; may recruit TSG101 to the plasma membrane. Interacts (via PPxY motifs) with WWP2 (via WW domains); ubiquitinates ARRDC1. Interacts with SLC11A2; controls the incorporation of SLC11A2 into extracellular vesicles through an ubiquitination-dependent mechanism. Interacts with WWP1 (via WW domains). Interacts with NEDD4 (via WW domains). Interacts with PDCD6IP. Ubiquitinated. Ubiquitination by WWP2; promotes localization to extracellular microvesicles. Ubiquitinated by WWP1.

The protein resides in the cell membrane. Functions as an adapter recruiting ubiquitin-protein ligases to their specific substrates. Through an ubiquitination-dependent mechanism plays for instance a role in the incorporation of SLC11A2 into extracellular vesicles. More generally, plays a role in the extracellular transport of proteins between cells through the release in the extracellular space of microvesicles. By participating to the ITCH-mediated ubiquitination and subsequent degradation of NOTCH1, negatively regulates the NOTCH signaling pathway. The protein is Arrestin domain-containing protein 1 of Mus musculus (Mouse).